Here is a 384-residue protein sequence, read N- to C-terminus: Dual-specificity RNA methyltransferase RlmN (384 aa).

Glutamate 105 acts as the Proton acceptor in catalysis. Residues 111 to 350 (EDDRATLCVS…TIVRKTRGDD (240 aa)) enclose the Radical SAM core domain. Cysteine 118 and cysteine 355 are disulfide-bonded. The [4Fe-4S] cluster site is built by cysteine 125, cysteine 129, and cysteine 132. S-adenosyl-L-methionine is bound by residues 179–180 (GE), serine 211, 233–235 (SLH), and asparagine 312. The active-site S-methylcysteine intermediate is cysteine 355.

The protein belongs to the radical SAM superfamily. RlmN family. It depends on [4Fe-4S] cluster as a cofactor.

It localises to the cytoplasm. It carries out the reaction adenosine(2503) in 23S rRNA + 2 reduced [2Fe-2S]-[ferredoxin] + 2 S-adenosyl-L-methionine = 2-methyladenosine(2503) in 23S rRNA + 5'-deoxyadenosine + L-methionine + 2 oxidized [2Fe-2S]-[ferredoxin] + S-adenosyl-L-homocysteine. The enzyme catalyses adenosine(37) in tRNA + 2 reduced [2Fe-2S]-[ferredoxin] + 2 S-adenosyl-L-methionine = 2-methyladenosine(37) in tRNA + 5'-deoxyadenosine + L-methionine + 2 oxidized [2Fe-2S]-[ferredoxin] + S-adenosyl-L-homocysteine. Its function is as follows. Specifically methylates position 2 of adenine 2503 in 23S rRNA and position 2 of adenine 37 in tRNAs. m2A2503 modification seems to play a crucial role in the proofreading step occurring at the peptidyl transferase center and thus would serve to optimize ribosomal fidelity. The sequence is that of Dual-specificity RNA methyltransferase RlmN from Escherichia fergusonii (strain ATCC 35469 / DSM 13698 / CCUG 18766 / IAM 14443 / JCM 21226 / LMG 7866 / NBRC 102419 / NCTC 12128 / CDC 0568-73).